The primary structure comprises 265 residues: Chlorophyll a-b binding protein 1A, chloroplastic (265 aa).

Residues 1–34 (MAAAAMALSSPSFAGQAVKLSPSASENSGNGRIT) constitute a chloroplast transit peptide. A helical membrane pass occupies residues 151-171 (LVHAQSILAIWACQVVLMGAV). Positions 152, 156, 164, 172, 175, and 181 each coordinate chlorophyll b. Chlorophyll a is bound by residues lysine 212, glutamate 213, asparagine 216, arginine 218, glutamine 230, histidine 245, and alanine 254. The helical transmembrane segment at 219 to 239 (LAMFSMFGFFVQAIVTGKGPL) threads the bilayer. Phenylalanine 261 serves as a coordination point for chlorophyll b.

This sequence belongs to the light-harvesting chlorophyll a/b-binding (LHC) protein family. The LHC complex consists of chlorophyll a-b binding proteins. Binds at least 14 chlorophylls (8 Chl-a and 6 Chl-b) and carotenoids such as lutein and neoxanthin. serves as cofactor. In terms of processing, photoregulated by reversible phosphorylation of its threonine residues.

It localises to the plastid. The protein resides in the chloroplast thylakoid membrane. Its function is as follows. The light-harvesting complex (LHC) functions as a light receptor, it captures and delivers excitation energy to photosystems with which it is closely associated. The polypeptide is Chlorophyll a-b binding protein 1A, chloroplastic (CAB1A) (Solanum lycopersicum (Tomato)).